Consider the following 195-residue polypeptide: Imidazoleglycerol-phosphate dehydratase (195 aa).

The protein belongs to the imidazoleglycerol-phosphate dehydratase family.

It localises to the cytoplasm. It catalyses the reaction D-erythro-1-(imidazol-4-yl)glycerol 3-phosphate = 3-(imidazol-4-yl)-2-oxopropyl phosphate + H2O. The protein operates within amino-acid biosynthesis; L-histidine biosynthesis; L-histidine from 5-phospho-alpha-D-ribose 1-diphosphate: step 6/9. This Burkholderia ambifaria (strain MC40-6) protein is Imidazoleglycerol-phosphate dehydratase.